Here is a 394-residue protein sequence, read N- to C-terminus: Growth-regulating factor 4 (394 aa).

In terms of domain architecture, QLQ spans 64-99 (PFTAAQYEELEQQALIYKYLVAGVPVPPDLVLPIRR). Residues 125–169 (DPEPGRCRRTDGKKWRCSKEAAPDSKYCERHMHRGRNRSRKPVET) form the WRC domain. 2 consecutive short sequence motifs (bipartite nuclear localization signal) follow at residues 130–140 (RCRRTDGKKWR) and 158–165 (RGRNRSRK). Residues 156 to 180 (MHRGRNRSRKPVETQLVAQSQPPSS) are disordered. The span at 170–180 (QLVAQSQPPSS) shows a compositional bias: low complexity.

Belongs to the GRF family. As to quaternary structure, interacts with GIF1. Interacts with GSK2. As to expression, expressed in stems. Expressed in panicles.

It is found in the nucleus. Transactivation activity is repressed by GSK2. Functionally, transcription activator that plays a role in the regulation of meristematic function in leaves, stems and inflorescences. Transcription activator that plays a regulatory role in grain development. Positively regulates grain size by promoting cell division and expansion, leading to increased grain length and width. Positively regulates the expression of genes promoting cell proliferation. Activates the expression of expansin genes to promote cell expansion and grain size. May promote grain size by activating brassinosteroid responses. Component of a network formed by the microRNA396 (miRNA396), the GRFs and their interacting factors (GIFs) acting in the regulation of meristem function, at least partially through the control of cell proliferation. Component of the miRNA396c-GRF4-GIF1 regulatory module that plays an important role in grain size determination. This chain is Growth-regulating factor 4, found in Oryza sativa subsp. japonica (Rice).